A 298-amino-acid polypeptide reads, in one-letter code: Single myb histone 2 (298 aa).

The HTH myb-type domain maps to 1 to 61 (MGVPKQRWTP…KWRNLSVTAG (61 aa)). The segment at residues 28-57 (WRTILRDSDFSALLRLRSNVDLKDKWRNLS) is a DNA-binding region (H-T-H motif). The H15 domain maps to 124-192 (SVARLDDLIV…KVNQKYRIAP (69 aa)). Residues 237–278 (EEAAAFAAKAVAEAEVAMAEAEEAARVAEAAENDAEAAKAFL) are a coiled coil.

It belongs to the histone H1/H5 family. SMH subfamily. As to quaternary structure, forms a homodimer and heterodimers.

It localises to the nucleus. The protein resides in the chromosome. Its subcellular location is the nucleolus. It is found in the telomere. Its function is as follows. Binds preferentially double-stranded telomeric repeats, but may also bind to the single telomeric strand. The sequence is that of Single myb histone 2 (SMH2) from Zea mays (Maize).